A 377-amino-acid polypeptide reads, in one-letter code: MNLKHPTRKDHILIKVVNNLLIDLPTPSNLSIMWNWGSLLGIFLIIPIITGLFLAMHYTPHMNLAFESIYHIMYDVNMGWLIRFIHVNGASFFFIFLYLHMARGMYYYSFHYKEVWLIGCTIYVVSMATAFMGYILPWGQMSLWGATVITNMLTTIPYLGQYLVQWIWGGFAVGNPTLNRFFVLHFILPFIILALSIIHLIFLHSKGSTNPLGMNSNAYKIPFHPYYSSKDLMFLLLLMMIMMVIIFWNPFLFMDAENSLEANFMKTPVHIKPEWYFLWVYTLLRSIPNKLGGVLTMVFSILILFLLPFISNFNYITSMSMINKLLFWSFVVNMLILTWIGGMPVVPLFETMGLTSTFLYFIIILIYSNSFLMINKS.

Transmembrane regions (helical) follow at residues 36-56 (WGSLLGIFLIIPIITGLFLAM), 80-102 (WLIRFIHVNGASFFFIFLYLHMA), 115-135 (VWLIGCTIYVVSMATAFMGYI), and 181-201 (FFVLHFILPFIILALSIIHLI). Heme b-binding residues include His-86 and His-100. Heme b contacts are provided by His-185 and His-199. His-204 provides a ligand contact to a ubiquinone. The next 4 helical transmembrane spans lie at 227–247 (YSSKDLMFLLLLMMIMMVIIF), 291–311 (LGGVLTMVFSILILFLLPFIS), 326–346 (LFWSFVVNMLILTWIGGMPVV), and 354–374 (LTSTFLYFIIILIYSNSFLMI).

It belongs to the cytochrome b family. In terms of assembly, the main subunits of complex b-c1 are: cytochrome b, cytochrome c1 and the Rieske protein. Heme b is required as a cofactor.

Its subcellular location is the mitochondrion inner membrane. In terms of biological role, component of the ubiquinol-cytochrome c reductase complex (complex III or cytochrome b-c1 complex) that is part of the mitochondrial respiratory chain. The b-c1 complex mediates electron transfer from ubiquinol to cytochrome c. Contributes to the generation of a proton gradient across the mitochondrial membrane that is then used for ATP synthesis. This is Cytochrome b (mt:Cyt-b) from Myzostoma seymourcollegiorum (Polychaete worm).